Consider the following 137-residue polypeptide: Small ribosomal subunit protein bS6 (137 aa).

A disordered region spans residues 104 to 137; sequence SLVNKANNKPEPKPTKAKKEDVAPEAKEQAQTEA. The segment covering 111–137 has biased composition (basic and acidic residues); that stretch reads NKPEPKPTKAKKEDVAPEAKEQAQTEA.

It belongs to the bacterial ribosomal protein bS6 family.

Its function is as follows. Binds together with bS18 to 16S ribosomal RNA. In Helicobacter hepaticus (strain ATCC 51449 / 3B1), this protein is Small ribosomal subunit protein bS6.